We begin with the raw amino-acid sequence, 895 residues long: MTAWTMGARGLDKRGSFFKLIDTIASEIGELKQEMVRTDVNLENGLEPAETHSMVRHKDGGYSEEEDVKTCARDSGYDSLSNRLSILDRLLHTHPIWLQLSLSEEEAAEVLQAQPPGIFLVHKSTKMQKKVLSLRLPCEFGAPLKEFAIKESTYTFSLEGSGISFADLFRLIAFYCISRDVLPFTLKLPYAISTAKSEAQLEELAQMGLNFWSSPADSKPPNLPPPHRPLSSDGVCPASLRQLCLINGVHSIKTRTPSELECSQTNGALCFINPLFLKVHSQDLSGGLKRPSTRTPNANGTERTRSPPPRPPPPAINSLHTSPRLARTETQTSMPETVNHNKHGNVALPGTKPTPIPPPRLKKQASFLEAEGGAKTLSGGRPGAGPELELGTAGSPGGAPPEAAPGDCTRAPPPSSESRPPCHGGRQRLSDMSISTSSSDSLEFDRSMPLFGYEADTNSSLEDYEGESDQETMAPPIKSKKKRSSSFVLPKLVKSQLQKVSGVFSSFMTPEKRMVRRIAELSRDKCTYFGCLVQDYVSFLQENKECHVSSTDMLQTIRQFMTQVKNYLSQSSELDPPIESLIPEDQIDVVLEKAMHKCILKPLKGHVEAMLKDFHMADGSWKQLKENLQLVRQRNPQELGVFAPTPDFVDVEKIKVKFMTMQKMYSPEKKVMLLLRVCKLIYTVMENNSGRMYGADDFLPVLTYVIAQCDMLELDTEIEYMMELLDPSLLHGEGGYYLTSAYGALSLIKNFQEEQAARLLSSETRDTLRQWHKRRTTNRTIPSVDDFQNYLRVAFQEVNSGCTGKTLLVRPYITTEDVCQICAEKFKVGDPEEYSLFLFVDETWQQLAEDTYPQKIKAELHSRPQPHIFHFVYKRIKNDPYGIIFQNGEEDLTTS.

Residues W97 to Y190 form the SH2 domain. The segment at L284–L361 is disordered. The span at S306–A315 shows a compositional bias: pro residues. Polar residues predominate over residues T328–V338. The residue at position 366 (S366) is a Phosphoserine. 2 disordered regions span residues G373–L442 and S460–K481. A compositionally biased stretch (low complexity) spans S430 to S441. S501 is modified (phosphoserine). Position 509 is a phosphothreonine (T509). The VPS9 domain maps to D618 to A757. Residues F787–N878 enclose the Ras-associating domain.

Belongs to the RIN (Ras interaction/interference) family. Homotetramer; probably composed of anti-parallel linkage of two parallel dimers. Interacts with Ras. Interacts with RAB5B, with a much higher affinity for GTP-bound activated RAB5B. Does not interact with other members of the Rab family. In terms of tissue distribution, widely expressed. Expressed in heart, kidney, lung placenta. Expressed at low level in skeletal muscle, spleen and peripheral blood.

The protein localises to the cytoplasm. Ras effector protein. May function as an upstream activator and/or downstream effector for RAB5B in endocytic pathway. May function as a guanine nucleotide exchange (GEF) of RAB5B, required for activating the RAB5 proteins by exchanging bound GDP for free GTP. This Homo sapiens (Human) protein is Ras and Rab interactor 2 (RIN2).